Consider the following 396-residue polypeptide: Na(+)/H(+) antiporter NhaA 2 (396 aa).

The next 11 helical transmembrane spans lie at 17–37 (LSGLILFVVTVLAVTIANSDF), 62–82 (LLHWINDVLMAIFFLVVGLEI), 98–118 (SFPIIAAIGGMIVPAILYISL), 125–145 (GFGVPMATDIAFALGILMLLG), 154–174 (LFLVTLAVVDDLGAIVVVAIF), 179–199 (LHFEYFLYAFAVYSIIWFLNY), 209–229 (IILGVFLWIFIHKTGIHSTIA), 268–288 (FSAFIIMPLFAFANAGVIIDF), 296–316 (LIVLGVALGLIIGKPIGIFSF), 337–357 (IFAVGFLGGIGFTMSIFISHL), and 368–388 (VKLGIFASSVIAAIIGSVLLI).

The protein belongs to the NhaA Na(+)/H(+) (TC 2.A.33) antiporter family.

It is found in the cell inner membrane. It carries out the reaction Na(+)(in) + 2 H(+)(out) = Na(+)(out) + 2 H(+)(in). Functionally, na(+)/H(+) antiporter that extrudes sodium in exchange for external protons. The polypeptide is Na(+)/H(+) antiporter NhaA 2 (Aliarcobacter butzleri (strain RM4018) (Arcobacter butzleri)).